Consider the following 280-residue polypeptide: Phosphonates import ATP-binding protein PhnC (280 aa).

The 236-residue stretch at 4–239 folds into the ABC transporter domain; it reads ITVTNLHKSY…VIDDIYGNIQ (236 aa). 36–43 lines the ATP pocket; that stretch reads GESGAGKS. Residues 246 to 280 form a disordered region; sequence GDDANADVAPTTSSDGGTDAAGGPDQQPASDPHLS.

The protein belongs to the ABC transporter superfamily. Phosphonates importer (TC 3.A.1.9.1) family. In terms of assembly, the complex is composed of two ATP-binding proteins (PhnC), two transmembrane proteins (PhnE) and a solute-binding protein (PhnD).

It is found in the cell membrane. It catalyses the reaction phosphonate(out) + ATP + H2O = phosphonate(in) + ADP + phosphate + H(+). Part of the ABC transporter complex PhnCDE involved in phosphonates import. Responsible for energy coupling to the transport system. This is Phosphonates import ATP-binding protein PhnC from Halobacterium salinarum (strain ATCC 700922 / JCM 11081 / NRC-1) (Halobacterium halobium).